Consider the following 99-residue polypeptide: Large ribosomal subunit protein bL21 (99 aa).

This sequence belongs to the bacterial ribosomal protein bL21 family. Part of the 50S ribosomal subunit. Contacts protein L20.

In terms of biological role, this protein binds to 23S rRNA in the presence of protein L20. The polypeptide is Large ribosomal subunit protein bL21 (Mesomycoplasma hyopneumoniae (strain 7448) (Mycoplasma hyopneumoniae)).